The following is a 205-amino-acid chain: Proteasome subunit beta type-3 (205 aa).

It belongs to the peptidase T1B family. In terms of assembly, the 26S proteasome consists of a 20S proteasome core and two 19S regulatory subunits. The 20S proteasome core is composed of 28 subunits that are arranged in four stacked rings, resulting in a barrel-shaped structure. The two end rings are each formed by seven alpha subunits, and the two central rings are each formed by seven beta subunits. The catalytic chamber with the active sites is on the inside of the barrel.

It is found in the cytoplasm. It localises to the nucleus. In terms of biological role, non-catalytic component of the proteasome, a multicatalytic proteinase complex which is characterized by its ability to cleave peptides with Arg, Phe, Tyr, Leu, and Glu adjacent to the leaving group at neutral or slightly basic pH. The proteasome has an ATP-dependent proteolytic activity. This is Proteasome subunit beta type-3 (psmb3) from Oncorhynchus mykiss (Rainbow trout).